The primary structure comprises 446 residues: Tubulin alpha chain-like 3 (446 aa).

The short motif at 1 to 4 (MREC) is the MREC motif element. Q11, E78, S147, G151, T152, T186, N213, and N235 together coordinate GTP. E78 provides a ligand contact to Mg(2+). E261 is a catalytic residue.

Belongs to the tubulin family. In terms of assembly, dimer of alpha and beta chains. A typical microtubule is a hollow water-filled tube with an outer diameter of 25 nm and an inner diameter of 15 nM. Alpha-beta heterodimers associate head-to-tail to form protofilaments running lengthwise along the microtubule wall with the beta-tubulin subunit facing the microtubule plus end conferring a structural polarity. Microtubules usually have 13 protofilaments but different protofilament numbers can be found in some organisms and specialized cells. Requires Mg(2+) as cofactor. Some glutamate residues at the C-terminus are polyglutamylated, resulting in polyglutamate chains on the gamma-carboxyl group. Polyglutamylation plays a key role in microtubule severing by spastin (SPAST). SPAST preferentially recognizes and acts on microtubules decorated with short polyglutamate tails: severing activity by SPAST increases as the number of glutamates per tubulin rises from one to eight, but decreases beyond this glutamylation threshold. Glutamylation is also involved in cilia motility. Post-translationally, some glutamate residues at the C-terminus are monoglycylated but not polyglycylated due to the absence of functional TTLL10 in human. Monoglycylation is mainly limited to tubulin incorporated into cilia and flagella axonemes, which is required for their stability and maintenance. Flagella glycylation controls sperm motility. Both polyglutamylation and monoglycylation can coexist on the same protein on adjacent residues, and lowering glycylation levels increases polyglutamylation, and reciprocally.

Its subcellular location is the cytoplasm. It localises to the cytoskeleton. It carries out the reaction GTP + H2O = GDP + phosphate + H(+). In terms of biological role, tubulin is the major constituent of microtubules, a cylinder consisting of laterally associated linear protofilaments composed of alpha- and beta-tubulin heterodimers. Microtubules grow by the addition of GTP-tubulin dimers to the microtubule end, where a stabilizing cap forms. Below the cap, tubulin dimers are in GDP-bound state, owing to GTPase activity of alpha-tubulin. In Homo sapiens (Human), this protein is Tubulin alpha chain-like 3 (TUBAL3).